Here is a 242-residue protein sequence, read N- to C-terminus: Putative pyrimidine-specific ribonucleoside hydrolase RihB (242 aa).

Substrate is bound by residues Gln156 and His168.

It belongs to the IUNH family. RihB subfamily.

The enzyme catalyses a pyrimidine ribonucleoside + H2O = a pyrimidine nucleobase + D-ribose. This is Putative pyrimidine-specific ribonucleoside hydrolase RihB (rihB) from Shigella boydii serotype 4 (strain Sb227).